The following is an 863-amino-acid chain: Glycogen phosphorylase (863 aa).

Residue lysine 618 is modified to N6-(pyridoxal phosphate)lysine.

The protein belongs to the glycogen phosphorylase family. Pyridoxal 5'-phosphate serves as cofactor.

The catalysed reaction is [(1-&gt;4)-alpha-D-glucosyl](n) + phosphate = [(1-&gt;4)-alpha-D-glucosyl](n-1) + alpha-D-glucose 1-phosphate. In terms of biological role, phosphorylase is an important allosteric enzyme in carbohydrate metabolism. Enzymes from different sources differ in their regulatory mechanisms and in their natural substrates. However, all known phosphorylases share catalytic and structural properties. This is Glycogen phosphorylase (glgP) from Mycobacterium tuberculosis (strain ATCC 25618 / H37Rv).